We begin with the raw amino-acid sequence, 97 residues long: Aspartyl/glutamyl-tRNA(Asn/Gln) amidotransferase subunit C (97 aa).

Belongs to the GatC family. Heterotrimer of A, B and C subunits.

It carries out the reaction L-glutamyl-tRNA(Gln) + L-glutamine + ATP + H2O = L-glutaminyl-tRNA(Gln) + L-glutamate + ADP + phosphate + H(+). The enzyme catalyses L-aspartyl-tRNA(Asn) + L-glutamine + ATP + H2O = L-asparaginyl-tRNA(Asn) + L-glutamate + ADP + phosphate + 2 H(+). Its function is as follows. Allows the formation of correctly charged Asn-tRNA(Asn) or Gln-tRNA(Gln) through the transamidation of misacylated Asp-tRNA(Asn) or Glu-tRNA(Gln) in organisms which lack either or both of asparaginyl-tRNA or glutaminyl-tRNA synthetases. The reaction takes place in the presence of glutamine and ATP through an activated phospho-Asp-tRNA(Asn) or phospho-Glu-tRNA(Gln). This is Aspartyl/glutamyl-tRNA(Asn/Gln) amidotransferase subunit C from Listeria monocytogenes serotype 4b (strain CLIP80459).